The chain runs to 312 residues: MKWSEICVHTTQLAVEAVSNLLHEVGAQGVVIEDVEDFDRMMAEDHFGEIWDVSDRETYPTSGVHVKAYVPASGDFQDLLSNLKKEIERLRTMLDIGSGDVTVAEIDEEDWAHSWKQYYKPVKISQQLTIVPLWEEYTPQPEENVILLDPGMAFGTGTHPTTMLCIQAIENYIREGDHVIDVGTGSGVLSIAAAKLGAASVKALDLDSVAVESARQNVETNGVGELVQVDTGDLLKGVEGEYDLVVANILADVILLFIEDAYARTKSGGRFITSGIIGEKRAEVTNALVAAGFEIEETRVMEDWVAIIAKKG.

S-adenosyl-L-methionine-binding residues include Thr-162, Gly-183, Asp-205, and Asn-248.

Belongs to the methyltransferase superfamily. PrmA family.

The protein resides in the cytoplasm. The enzyme catalyses L-lysyl-[protein] + 3 S-adenosyl-L-methionine = N(6),N(6),N(6)-trimethyl-L-lysyl-[protein] + 3 S-adenosyl-L-homocysteine + 3 H(+). In terms of biological role, methylates ribosomal protein L11. The protein is Ribosomal protein L11 methyltransferase of Exiguobacterium sp. (strain ATCC BAA-1283 / AT1b).